We begin with the raw amino-acid sequence, 359 residues long: CCAAT/enhancer-binding protein alpha (359 aa).

A disordered region spans residues 1 to 55; sequence MESADFYEVEPRPPMSSHLQSPPHAPSNAAFGFPRGAGPAPPPAPPAAPEPLGGI. Residues 1-70 form a required to repress E2F1:TFDP1-mediated transcription, to inhibit cell cycle and to induce adipocyte differentiation region; the sequence is MESADFYEVE…SIDISAYIDP (70 aa). Positions 29–38 are enriched in low complexity; sequence AAFGFPRGAG. A compositionally biased stretch (pro residues) spans 39 to 49; that stretch reads PAPPPAPPAAP. Residues 54 to 72 form a required for interaction with TRIB1 region; the sequence is GICEHETSIDISAYIDPAA. The interval 126–200 is required to induce adipocyte differentiation; sequence PPGYGCAAAG…HASPAHLAAP (75 aa). Position 159 is an N6-acetyllysine; alternate (lysine 159). A Glycyl lysine isopeptide (Lys-Gly) (interchain with G-Cter in SUMO); alternate cross-link involves residue lysine 159. Residue lysine 159 forms a Glycyl lysine isopeptide (Lys-Gly) (interchain with G-Cter in SUMO2); alternate linkage. Disordered stretches follow at residues 176–195 and 213–293; these read LFPYQPPPPPPPPHPHASPA and TMHL…RERN. Residues 179 to 191 show a composition bias toward pro residues; sequence YQPPPPPPPPHPH. The required to functionally cooperate with SREBF1 in promoter activation stretch occupies residues 180-194; that stretch reads QPPPPPPPPHPHASP. Position 193 is a phosphoserine (serine 193). The segment covering 220–232 has biased composition (pro residues); that stretch reads HPTPPPTPVPSPH. A phosphothreonine; by GSK3 mark is found at threonine 222 and threonine 226. Serine 230 is subject to Phosphoserine; by GSK3. The span at 233-255 shows a compositional bias: low complexity; that stretch reads AAPALGAAGLPGPGSALKGLAGA. Positions 240 to 359 are interaction with FOXO1; that stretch reads AGLPGPGSAL…SLVKAMGNCA (120 aa). Residues 261–272 are compositionally biased toward gly residues; it reads TGGGGGGSGAGA. The segment covering 277–293 has biased composition (basic and acidic residues); it reads KSVDKNSNEYRVRRERN. In terms of domain architecture, bZIP spans 283–346; the sequence is SNEYRVRRER…DTLRGIFRQL (64 aa). Residues 286–301 mediate DNA binding; sequence YRVRRERNNIAVRKSR. The tract at residues 287 to 314 is basic motif; the sequence is RVRRERNNIAVRKSRDKAKQRNVETQQK. Residues 318–346 are leucine-zipper; sequence LTSDNDRLRKRVEQLSRELDTLRGIFRQL.

This sequence belongs to the bZIP family. C/EBP subfamily. Binds DNA as a homodimer and as a heterodimer. Can form stable heterodimers with CEBPB, CEBPD, CEBPE and CEBPG. Interacts with PRDM16. Interacts with UBN1. Interacts with ZNF638; this interaction increases transcriptional activation. Interacts with the complex TFDP2:E2F1; the interaction prevents CEBPA binding to target gene promoters and represses its transcriptional activity. Interacts with RB1. Interacts (when phosphorylated at Ser-193) with CDK2, CDK4, E2F4 and SMARCA2. Interacts with SREBPF1. Interacts with FOXO1 (via the Fork-head domain); the interaction increases when FOXO1 is deacetylated. Interacts with SIX1. Interacts (via recognition sequence) with TRIB1. Interacts (via bZIP domain) with OVOL2 (via zinc-finger domains); the interaction inhibits the transcription factor activity of CEBPA and is required to repress adipogenesis. As to quaternary structure, interacts with TAF1A and UBTF. In terms of assembly, interacts with TAF1A and UBTF. Interacts with NPM1. In terms of processing, sumoylated, sumoylation blocks the inhibitory effect on cell proliferation by disrupting the interaction with SMARCA2. Phosphorylation at Ser-193 is required for interaction with CDK2, CDK4 and SWI/SNF complex leading to cell cycle inhibition. Dephosphorylated at Ser-193 by protein phosphatase 2A (PP2A) through PI3K/AKT signaling pathway regulation. Phosphorylation at Thr-222 and Thr-226 by GSK3 is constitutive in adipose tissue and lung. In liver, both Thr-222 and Thr-226 are phosphorylated only during feeding but not during fasting. Phosphorylation of the GSK3 consensus sites selectively decreases transactivation activity on IRE-controlled promoters. Post-translationally, ubiquitinated by COP1 upon interaction with TRIB1. Isoform 2 and isoform 3 are expressed in adipose tissue and liver (at protein level).

The protein resides in the nucleus. It localises to the nucleolus. Transcription factor that coordinates proliferation arrest and the differentiation of myeloid progenitors, adipocytes, hepatocytes, and cells of the lung and the placenta. Binds directly to the consensus DNA sequence 5'-T[TG]NNGNAA[TG]-3' acting as an activator on distinct target genes. During early embryogenesis, plays essential and redundant functions with CEBPB. Essential for the transition from common myeloid progenitors (CMP) to granulocyte/monocyte progenitors (GMP). Critical for the proper development of the liver and the lung. Necessary for terminal adipocyte differentiation, is required for postnatal maintenance of systemic energy homeostasis and lipid storage. To regulate these different processes at the proper moment and tissue, interplays with other transcription factors and modulators. Down-regulates the expression of genes that maintain cells in an undifferentiated and proliferative state through E2F1 repression, which is critical for its ability to induce adipocyte and granulocyte terminal differentiation. Reciprocally E2F1 blocks adipocyte differentiation by binding to specific promoters and repressing CEBPA binding to its target gene promoters. Proliferation arrest also depends on a functional binding to SWI/SNF complex. In liver, regulates gluconeogenesis and lipogenesis through different mechanisms. To regulate gluconeogenesis, functionally cooperates with FOXO1 binding to IRE-controlled promoters and regulating the expression of target genes such as PCK1 or G6PC1. To modulate lipogenesis, interacts and transcriptionally synergizes with SREBF1 in promoter activation of specific lipogenic target genes such as ACAS2. In adipose tissue, seems to act as FOXO1 coactivator accessing to ADIPOQ promoter through FOXO1 binding sites. In terms of biological role, can act as dominant-negative. Binds DNA and have transctivation activity, even if much less efficiently than isoform 2. Does not inhibit cell proliferation. Its function is as follows. Directly and specifically enhances ribosomal DNA transcription interacting with RNA polymerase I-specific cofactors and inducing histone acetylation. This is CCAAT/enhancer-binding protein alpha from Mus musculus (Mouse).